The chain runs to 454 residues: Glutamine synthetase (454 aa).

The GS beta-grasp domain occupies 25-111; the sequence is QGIDFLRLQF…LICDVVDREG (87 aa). A GS catalytic domain is found at 118-454; the sequence is PRQVLKNVLA…WETDRYLEKF (337 aa). Residues Glu-141 and Glu-143 each coordinate Mg(2+). Glu-193 lines the ATP pocket. Glu-198 and Glu-205 together coordinate Mg(2+). L-glutamate contacts are provided by residues 249–250 and Gly-250; that span reads NG. Residue His-254 coordinates Mg(2+). ATP contacts are provided by residues 256–258 and Ser-258; that span reads HIS. L-glutamate-binding residues include Arg-308, Glu-314, and Arg-326. Residues Arg-326 and Arg-331 each contribute to the ATP site. Residue Glu-343 participates in Mg(2+) binding. Arg-345 serves as a coordination point for L-glutamate.

This sequence belongs to the glutamine synthetase family. As to quaternary structure, oligomer of 12 subunits arranged in the form of two hexagons. In its feedback-inhibited form, interacts with TnrA in order to block its DNA-binding activity. It depends on Mg(2+) as a cofactor.

It localises to the cytoplasm. The enzyme catalyses L-glutamate + NH4(+) + ATP = L-glutamine + ADP + phosphate + H(+). With respect to regulation, inhibited by glutamine. Its function is as follows. Glutamine synthetase (GS) is an unusual multitasking protein that functions as an enzyme, a transcription coregulator, and a chaperone in ammonium assimilation and in the regulation of genes involved in nitrogen metabolism. It catalyzes the ATP-dependent biosynthesis of glutamine from glutamate and ammonia. Feedback-inhibited GlnA also interacts with and regulates the activity of the transcriptional regulator TnrA. During nitrogen limitation, TnrA is in its DNA-binding active state and turns on the transcription of genes required for nitrogen assimilation. Under conditions of nitrogen excess, feedback-inhibited GlnA forms a stable complex with TnrA, which inhibits its DNA-binding activity. In contrast, feedback-inhibited GlnA acts as a chaperone to stabilize the DNA-binding activity of GlnR, which represses the transcription of nitrogen assimilation genes. This chain is Glutamine synthetase, found in Halobacterium salinarum (strain ATCC 700922 / JCM 11081 / NRC-1) (Halobacterium halobium).